We begin with the raw amino-acid sequence, 349 residues long: MSEDYLDRDVSPALTVGEADIDVSLRPRSLREFIGQPRVREQLQLVIEGAKNRGATPDHILLSGPPGLGKTSLAMIIAAELGSSLRMTSGPALERAGDLAVMLSNLVEHDVLFIDEIHRIARPAEEMLYLAMEDFRVDVIVGKGPGATSIPLEVAPFTLVGATTRSGALTGPLRDRFGFTAHMDFYEPTELEGVLARAAGILGIELGVEAGAEIARRSRGTPRIANRLLRRVRDFAEVRADGVITRDVAKAALAVYDVDELGLDRLDRAVLSALTRSFGGGPVGVSTLAVAVGEEATTVEEVCEPFLVRAGMVARTPRGRVATAQAWTYLCMTPPVGVTGLSQPGLFES.

Residues 1–186 (MSEDYLDRDV…FGFTAHMDFY (186 aa)) form a large ATPase domain (RuvB-L) region. ATP-binding positions include Leu25, Arg26, Gly67, Lys70, Thr71, Ser72, 133–135 (EDF), Arg176, Tyr186, and Arg223. A Mg(2+)-binding site is contributed by Thr71. The segment at 187-257 (EPTELEGVLA…VAKAALAVYD (71 aa)) is small ATPAse domain (RuvB-S). The segment at 260–349 (ELGLDRLDRA…GLSQPGLFES (90 aa)) is head domain (RuvB-H). Residues Arg315 and Arg320 each coordinate DNA.

Belongs to the RuvB family. As to quaternary structure, homohexamer. Forms an RuvA(8)-RuvB(12)-Holliday junction (HJ) complex. HJ DNA is sandwiched between 2 RuvA tetramers; dsDNA enters through RuvA and exits via RuvB. An RuvB hexamer assembles on each DNA strand where it exits the tetramer. Each RuvB hexamer is contacted by two RuvA subunits (via domain III) on 2 adjacent RuvB subunits; this complex drives branch migration. In the full resolvosome a probable DNA-RuvA(4)-RuvB(12)-RuvC(2) complex forms which resolves the HJ.

It localises to the cytoplasm. It carries out the reaction ATP + H2O = ADP + phosphate + H(+). Its function is as follows. The RuvA-RuvB-RuvC complex processes Holliday junction (HJ) DNA during genetic recombination and DNA repair, while the RuvA-RuvB complex plays an important role in the rescue of blocked DNA replication forks via replication fork reversal (RFR). RuvA specifically binds to HJ cruciform DNA, conferring on it an open structure. The RuvB hexamer acts as an ATP-dependent pump, pulling dsDNA into and through the RuvAB complex. RuvB forms 2 homohexamers on either side of HJ DNA bound by 1 or 2 RuvA tetramers; 4 subunits per hexamer contact DNA at a time. Coordinated motions by a converter formed by DNA-disengaged RuvB subunits stimulates ATP hydrolysis and nucleotide exchange. Immobilization of the converter enables RuvB to convert the ATP-contained energy into a lever motion, pulling 2 nucleotides of DNA out of the RuvA tetramer per ATP hydrolyzed, thus driving DNA branch migration. The RuvB motors rotate together with the DNA substrate, which together with the progressing nucleotide cycle form the mechanistic basis for DNA recombination by continuous HJ branch migration. Branch migration allows RuvC to scan DNA until it finds its consensus sequence, where it cleaves and resolves cruciform DNA. This chain is Holliday junction branch migration complex subunit RuvB, found in Mycobacterium leprae (strain Br4923).